The following is a 116-amino-acid chain: Aspartate 1-decarboxylase (116 aa).

The Schiff-base intermediate with substrate; via pyruvic acid role is filled by serine 25. Serine 25 bears the Pyruvic acid (Ser) mark. Residue threonine 57 participates in substrate binding. The active-site Proton donor is the tyrosine 58. 73–75 (GAA) serves as a coordination point for substrate.

It belongs to the PanD family. As to quaternary structure, heterooctamer of four alpha and four beta subunits. It depends on pyruvate as a cofactor. Is synthesized initially as an inactive proenzyme, which is activated by self-cleavage at a specific serine bond to produce a beta-subunit with a hydroxyl group at its C-terminus and an alpha-subunit with a pyruvoyl group at its N-terminus.

It is found in the cytoplasm. The enzyme catalyses L-aspartate + H(+) = beta-alanine + CO2. The protein operates within cofactor biosynthesis; (R)-pantothenate biosynthesis; beta-alanine from L-aspartate: step 1/1. Its function is as follows. Catalyzes the pyruvoyl-dependent decarboxylation of aspartate to produce beta-alanine. The polypeptide is Aspartate 1-decarboxylase (Syntrophus aciditrophicus (strain SB)).